A 936-amino-acid polypeptide reads, in one-letter code: Protein SIEL (936 aa).

As to quaternary structure, interacts with SHR, MGP, SCR, JKD, CPC, TMO7 and AGL21, but not with LFY or STM.

It is found in the nucleus. Its subcellular location is the endosome. The protein localises to the cytoplasm. It localises to the cell cortex. Intracellular shuttle that promotes movement of SHR from the stele into the endodermis. Required for SHR association to endosomes and localization, and for intercellular movement of SHR. This Arabidopsis thaliana (Mouse-ear cress) protein is Protein SIEL.